Reading from the N-terminus, the 423-residue chain is Hypoxia responsive morphology factor B (423 aa).

The Bipartite nuclear localization signal motif lies at 46–69 (KRSKTRRPKKEYKLQYENTKAHRV). The segment at 157 to 187 (TQNCWAYRAAYLNAVHTIFSEQICSAMEVSP) is RNA recognition motif (RRM)-like domain. Over residues 243 to 257 (LSPQSGRGPEPSTQI) the composition is skewed to polar residues. Residues 243 to 273 (LSPQSGRGPEPSTQIAEPGRHDSQSEQSTIS) form a disordered region.

This sequence belongs to the hrmA family.

It is found in the nucleus. Its function is as follows. Probably modulates the generation of the hypoxia-typic morphotype (called H-MORPH) with altered biofilm architecture that leads to increased host inflammation, rapid disease progression, and mortality in a murine model of invasive aspergillosis. The protein is Hypoxia responsive morphology factor B of Aspergillus fumigatus (strain CBS 144.89 / FGSC A1163 / CEA10) (Neosartorya fumigata).